A 931-amino-acid chain; its full sequence is Scaffold attachment factor B1 (931 aa).

Positions 1–24 (MAETLSGLGDSGAASAAAVSSAAS) are enriched in low complexity. The interval 1–35 (MAETLSGLGDSGAASAAAVSSAASETGTRRLSDLR) is disordered. Residue Ala2 is modified to N-acetylalanine. Phosphoserine is present on residues Ser24 and Ser55. Residues 31–65 (LSDLRVIDLRAELRKRNLTSSGNKSVLMERLKKAI) enclose the SAP domain. Positions 64–121 (AIEEEGGNPDEIEVISEGNKKMPKRPSKGKKPEDEGVEDNGLEENSGDGQEDVETSLE) are disordered. Acidic residues predominate over residues 67–77 (EEGGNPDEIEV). A Phosphoserine modification is found at Ser79. Residues 98–118 (EGVEDNGLEENSGDGQEDVET) are compositionally biased toward acidic residues. Glycyl lysine isopeptide (Lys-Gly) (interchain with G-Cter in SUMO2) cross-links involve residues Lys171 and Lys185. Residues Ser194, Ser196, and Ser208 each carry the phosphoserine modification. Disordered regions lie at residues 205 to 304 (EEAS…TRCQ) and 316 to 430 (KREP…GRNF). The span at 224–233 (CKSEPVKEEG) shows a compositional bias: basic and acidic residues. A Glycyl lysine isopeptide (Lys-Gly) (interchain with G-Cter in SUMO) cross-link involves residue Lys230. Residues 267–287 (EEEEEEEEEEEQEEEQEEEGD) are compositionally biased toward acidic residues. Lys316 participates in a covalent cross-link: Glycyl lysine isopeptide (Lys-Gly) (interchain with G-Cter in SUMO). Polar residues predominate over residues 341–356 (EQSSTAAQLPETTSQE). Residues 368 to 380 (EPRDSKDDVKKFA) are compositionally biased toward basic and acidic residues. A Glycyl lysine isopeptide (Lys-Gly) (interchain with G-Cter in SUMO2) cross-link involves residue Lys403. Phosphoserine is present on residues Ser405 and Ser406. Over residues 412–423 (DTKRLSREEKGR) the composition is skewed to basic and acidic residues. Lys414 participates in a covalent cross-link: Glycyl lysine isopeptide (Lys-Gly) (interchain with G-Cter in SUMO2). One can recognise an RRM domain in the interval 428–506 (RNFWVSGLSS…KMISVEKAKS (79 aa)). Ser437 is subject to Phosphoserine. Composition is skewed to basic and acidic residues over residues 500 to 573 (SVEK…ERSR) and 581 to 592 (GTERTVVMDKSK). Disordered stretches follow at residues 500–663 (SVEK…WERE), 691–720 (RLER…LRRQ), 759–843 (RYHS…PRRD), and 872–931 (RWQG…QQTQ). Glycyl lysine isopeptide (Lys-Gly) (interchain with G-Cter in SUMO2) cross-links involve residues Lys505, Lys536, Lys565, and Lys592. The interval 550–816 (TDDGSTEKSK…RHGGPERHGR (267 aa)) is interaction with POLR2A; SFRS1; SFRS9 and SFRS10. Lys600 participates in a covalent cross-link: Glycyl lysine isopeptide (Lys-Gly) (interchain with G-Cter in SUMO1); alternate. A Glycyl lysine isopeptide (Lys-Gly) (interchain with G-Cter in SUMO2); alternate cross-link involves residue Lys600. Phosphoserine is present on residues Ser602, Ser604, Ser623, and Ser626. A compositionally biased stretch (basic and acidic residues) spans 603 to 663 (GSKERASKSQ…QRLQAQWERE (61 aa)). A Nuclear localization signal motif is present at residues 621 to 638 (KRSVVSFDKVKESRKSRD). Lys629 carries the N6-acetyllysine modification. The segment covering 759–820 (RYHSDFSRQD…PERHGRDSRD (62 aa)) has biased composition (basic and acidic residues). Arg834 carries the post-translational modification Omega-N-methylarginine. Residues Arg892, Arg898, Arg908, and Arg914 each carry the asymmetric dimethylarginine modification.

Monomer and homodimer. Interacts with KHDRBS3. Interacts with CLK2. Interacts with POLR2A, ASF/SRSF1, SRp30c/SRFS9 and TRA2B/SFRS10. Interacts with SRPK1 and inhibits its activity. Interacts with RBMX. Interacts with FUS. Interacts with ZBED4. Phosphorylated by CDC-like kinase 2 (CLK2). Post-translationally, sumoylated by PIAS1 with SUMO1 and SUMO2/3, desumoylated by SENP1. Sumoylation is required for transcriptional repressor activity.

The protein resides in the nucleus. Functionally, binds to scaffold/matrix attachment region (S/MAR) DNA and forms a molecular assembly point to allow the formation of a 'transcriptosomal' complex (consisting of SR proteins and RNA polymerase II) coupling transcription and RNA processing. Functions as an estrogen receptor corepressor and can also bind to the HSP27 promoter and decrease its transcription. Thereby acts as a negative regulator of cell proliferation. When associated with RBMX, binds to and stimulates transcription from the SREBF1 promoter. In Rattus norvegicus (Rat), this protein is Scaffold attachment factor B1 (Safb).